Consider the following 1071-residue polypeptide: MPKREDIKKVLLIGSGPITIGQAAEFDFSGSQACRSLKEEGIKVVLVNSNPATIMTDPEMADSVYIEPLDAKIVEKIIEKERPDGIIAGIGGQTGLNITSELAEKGVFEKYGVEILGTPVEAIKNTEDRELFKETMLRIGEKVPLSRAVNSLKEAEDVVDELGLPLIVRPAYTLGGAGGGIARTKEELLEITERGLRRSRINQVLIEESVLGWAEIEYEVMRDENDTCIVICNMENIDPMGVHTGESAVVAPSQTLSDAEHQMLRSASIKIIRALKIEGGCNIQYALKEGDYRVVEVNPRVSRSSALASKATGYPIARVTAKIAIGMKLDEIINNVTKSTPASFEPALDYVITKIPRWPFDKFTTADKTLTTAMKSTGEVMAIGRTIEESLLKAFKSLDIDNQLGNKHWDEPETKTLLKTPTSERLFVIFDALEKGMSVKEIFELSSINPFFISKIKRIVDMEKRIRAEELTPELLREAKKMGFPDTRLAELTGSTRQEISDLRHKAGILATFKMVDTCAAEFEAATPYYYSTYEDSCETNATTDKKKILILGAGPIRIGQGIEFDYCTVHAVTALREEGIETHIINNNPETVSTDFDTSDKLFFEPLTLEYVMNVIEREKPDGVLVQFGGQTSVNLAIPLKQELKRRTDLNTVILGTDPDDMDLAEDREKFYILMKELGVPQPEGGYATSHKEAIEVAKRIGFPVLVRPSYVLGGRAMEIVYDEIDLERYMKEAVRVSHEHPILIDDFLEAASEIDVDAVCDQKDVIIGAIMEHIEEAGVHSGDSACVIPPQSLSPEVLDQVRDYTRKIALALKVKGLINIQMAEKCGKVYVLEANPRSSRTIPFVSKSVGIPLAKIAAKVIAGHSLKSLGYTDEPKPKHVSIKEVLLPFDKLPGADPVLGPEMKSTGEVMGIDYDFGRAYYKAELAADNVLPLTGKVFLSIRNADKTELVDVAKKLQAAGLELMGTEGTVNYLARHGVFMDVVKKVHDGSPNVIDMMRRDEVDLIINTPTSKQSRRDGSRIRRAAVDFKVPYITTMQAAIAAAAAIETMKKGEELTIKSINEYHKEMEN.

The tract at residues 1–399 (MPKREDIKKV…SLLKAFKSLD (399 aa)) is carboxyphosphate synthetic domain. ATP-binding residues include R129, R169, G175, G176, E208, V210, E215, G241, V242, H243, Q284, and E296. Residues 133–325 (KETMLRIGEK…IARVTAKIAI (193 aa)) form the ATP-grasp 1 domain. Residues Q284, E296, and N298 each coordinate Mg(2+). Mn(2+) is bound by residues Q284, E296, and N298. The interval 400–540 (IDNQLGNKHW…YSTYEDSCET (141 aa)) is oligomerization domain. Residues 541–932 (NATTDKKKIL…YKAELAADNV (392 aa)) are carbamoyl phosphate synthetic domain. The ATP-grasp 2 domain occupies 673-864 (YILMKELGVP…LAKIAAKVIA (192 aa)). R709, D748, L750, E755, G780, V781, H782, S783, Q823, and E835 together coordinate ATP. Mg(2+) contacts are provided by Q823, E835, and N837. Mn(2+) contacts are provided by Q823, E835, and N837. The region spanning 931–1071 (NVLPLTGKVF…INEYHKEMEN (141 aa)) is the MGS-like domain. The segment at 933 to 1071 (LPLTGKVFLS…INEYHKEMEN (139 aa)) is allosteric domain.

Belongs to the CarB family. Composed of two chains; the small (or glutamine) chain promotes the hydrolysis of glutamine to ammonia, which is used by the large (or ammonia) chain to synthesize carbamoyl phosphate. Tetramer of heterodimers (alpha,beta)4. Mg(2+) serves as cofactor. Requires Mn(2+) as cofactor.

The enzyme catalyses hydrogencarbonate + L-glutamine + 2 ATP + H2O = carbamoyl phosphate + L-glutamate + 2 ADP + phosphate + 2 H(+). It catalyses the reaction hydrogencarbonate + NH4(+) + 2 ATP = carbamoyl phosphate + 2 ADP + phosphate + 2 H(+). It participates in amino-acid biosynthesis; L-arginine biosynthesis; carbamoyl phosphate from bicarbonate: step 1/1. The protein operates within pyrimidine metabolism; UMP biosynthesis via de novo pathway; (S)-dihydroorotate from bicarbonate: step 1/3. Large subunit of the glutamine-dependent carbamoyl phosphate synthetase (CPSase). CPSase catalyzes the formation of carbamoyl phosphate from the ammonia moiety of glutamine, carbonate, and phosphate donated by ATP, constituting the first step of 2 biosynthetic pathways, one leading to arginine and/or urea and the other to pyrimidine nucleotides. The large subunit (synthetase) binds the substrates ammonia (free or transferred from glutamine from the small subunit), hydrogencarbonate and ATP and carries out an ATP-coupled ligase reaction, activating hydrogencarbonate by forming carboxy phosphate which reacts with ammonia to form carbamoyl phosphate. This is Carbamoyl phosphate synthase large chain from Methanosarcina barkeri (strain Fusaro / DSM 804).